A 388-amino-acid polypeptide reads, in one-letter code: Succinate--CoA ligase [ADP-forming] subunit beta (388 aa).

Positions 9–244 (KQLFARYGMP…KSQEDEREAQ (236 aa)) constitute an ATP-grasp domain. Residues K46, 53–55 (GRG), E99, T102, and E107 contribute to the ATP site. Residues N199 and D213 each contribute to the Mg(2+) site. Substrate contacts are provided by residues N264 and 321 to 323 (GIV).

Belongs to the succinate/malate CoA ligase beta subunit family. Heterotetramer of two alpha and two beta subunits. Mg(2+) is required as a cofactor.

It catalyses the reaction succinate + ATP + CoA = succinyl-CoA + ADP + phosphate. It carries out the reaction GTP + succinate + CoA = succinyl-CoA + GDP + phosphate. Its pathway is carbohydrate metabolism; tricarboxylic acid cycle; succinate from succinyl-CoA (ligase route): step 1/1. Functionally, succinyl-CoA synthetase functions in the citric acid cycle (TCA), coupling the hydrolysis of succinyl-CoA to the synthesis of either ATP or GTP and thus represents the only step of substrate-level phosphorylation in the TCA. The beta subunit provides nucleotide specificity of the enzyme and binds the substrate succinate, while the binding sites for coenzyme A and phosphate are found in the alpha subunit. This chain is Succinate--CoA ligase [ADP-forming] subunit beta, found in Yersinia enterocolitica serotype O:8 / biotype 1B (strain NCTC 13174 / 8081).